The following is a 376-amino-acid chain: Chaperone protein DnaJ (376 aa).

Residues 5–70 (DYYEVLGVGR…DKKAAYDQFG (66 aa)) enclose the J domain. The CR-type zinc finger occupies 132–210 (GLTKELRIPT…CHGEGRVEKS (79 aa)). Residues Cys-145, Cys-148, Cys-162, Cys-165, Cys-184, Cys-187, Cys-198, and Cys-201 each contribute to the Zn(2+) site. CXXCXGXG motif repeat units lie at residues 145–152 (CDLCDGSG), 162–169 (CGTCHGQG), 184–191 (CPTCHGRG), and 198–205 (CGKCHGEG).

Belongs to the DnaJ family. In terms of assembly, homodimer. Zn(2+) serves as cofactor.

It localises to the cytoplasm. In terms of biological role, participates actively in the response to hyperosmotic and heat shock by preventing the aggregation of stress-denatured proteins and by disaggregating proteins, also in an autonomous, DnaK-independent fashion. Unfolded proteins bind initially to DnaJ; upon interaction with the DnaJ-bound protein, DnaK hydrolyzes its bound ATP, resulting in the formation of a stable complex. GrpE releases ADP from DnaK; ATP binding to DnaK triggers the release of the substrate protein, thus completing the reaction cycle. Several rounds of ATP-dependent interactions between DnaJ, DnaK and GrpE are required for fully efficient folding. Also involved, together with DnaK and GrpE, in the DNA replication of plasmids through activation of initiation proteins. The protein is Chaperone protein DnaJ of Shewanella frigidimarina (strain NCIMB 400).